The sequence spans 131 residues: Small ribosomal subunit protein uS8 (131 aa).

It belongs to the universal ribosomal protein uS8 family. As to quaternary structure, part of the 30S ribosomal subunit. Contacts proteins S5 and S12.

In terms of biological role, one of the primary rRNA binding proteins, it binds directly to 16S rRNA central domain where it helps coordinate assembly of the platform of the 30S subunit. In Malacoplasma penetrans (strain HF-2) (Mycoplasma penetrans), this protein is Small ribosomal subunit protein uS8.